A 492-amino-acid polypeptide reads, in one-letter code: Bifunctional purine biosynthesis protein PurH (492 aa).

Positions Met1–Val144 constitute an MGS-like domain.

It belongs to the PurH family.

It carries out the reaction (6R)-10-formyltetrahydrofolate + 5-amino-1-(5-phospho-beta-D-ribosyl)imidazole-4-carboxamide = 5-formamido-1-(5-phospho-D-ribosyl)imidazole-4-carboxamide + (6S)-5,6,7,8-tetrahydrofolate. It catalyses the reaction IMP + H2O = 5-formamido-1-(5-phospho-D-ribosyl)imidazole-4-carboxamide. It participates in purine metabolism; IMP biosynthesis via de novo pathway; 5-formamido-1-(5-phospho-D-ribosyl)imidazole-4-carboxamide from 5-amino-1-(5-phospho-D-ribosyl)imidazole-4-carboxamide (10-formyl THF route): step 1/1. Its pathway is purine metabolism; IMP biosynthesis via de novo pathway; IMP from 5-formamido-1-(5-phospho-D-ribosyl)imidazole-4-carboxamide: step 1/1. In Staphylococcus aureus (strain MRSA252), this protein is Bifunctional purine biosynthesis protein PurH.